Consider the following 392-residue polypeptide: Probable tRNA sulfurtransferase (392 aa).

The 108-residue stretch at 61–168 (DEALKLLSKV…EFTYIYSEII (108 aa)) folds into the THUMP domain. Residues 185-186 (LL), 210-211 (HF), Arg267, Gly289, and Gln298 each bind ATP.

Belongs to the ThiI family.

Its subcellular location is the cytoplasm. The catalysed reaction is [ThiI sulfur-carrier protein]-S-sulfanyl-L-cysteine + a uridine in tRNA + 2 reduced [2Fe-2S]-[ferredoxin] + ATP + H(+) = [ThiI sulfur-carrier protein]-L-cysteine + a 4-thiouridine in tRNA + 2 oxidized [2Fe-2S]-[ferredoxin] + AMP + diphosphate. It carries out the reaction [ThiS sulfur-carrier protein]-C-terminal Gly-Gly-AMP + S-sulfanyl-L-cysteinyl-[cysteine desulfurase] + AH2 = [ThiS sulfur-carrier protein]-C-terminal-Gly-aminoethanethioate + L-cysteinyl-[cysteine desulfurase] + A + AMP + 2 H(+). It participates in cofactor biosynthesis; thiamine diphosphate biosynthesis. Catalyzes the ATP-dependent transfer of a sulfur to tRNA to produce 4-thiouridine in position 8 of tRNAs, which functions as a near-UV photosensor. Also catalyzes the transfer of sulfur to the sulfur carrier protein ThiS, forming ThiS-thiocarboxylate. This is a step in the synthesis of thiazole, in the thiamine biosynthesis pathway. The sulfur is donated as persulfide by IscS. The protein is Probable tRNA sulfurtransferase of Acetivibrio thermocellus (strain ATCC 27405 / DSM 1237 / JCM 9322 / NBRC 103400 / NCIMB 10682 / NRRL B-4536 / VPI 7372) (Clostridium thermocellum).